A 362-amino-acid chain; its full sequence is 3-isopropylmalate dehydrogenase (362 aa).

Position 76–87 (76–87 (GPKWGTGSVRPE)) interacts with NAD(+). Substrate contacts are provided by Arg94, Arg104, Arg133, and Asp222. Residues Asp222, Asp247, and Asp251 each coordinate Mg(2+). 286–297 (GSAPDLGPGKVN) serves as a coordination point for NAD(+).

It belongs to the isocitrate and isopropylmalate dehydrogenases family. As to quaternary structure, homodimer. Mg(2+) serves as cofactor. It depends on Mn(2+) as a cofactor.

The protein localises to the cytoplasm. It catalyses the reaction (2R,3S)-3-isopropylmalate + NAD(+) = 4-methyl-2-oxopentanoate + CO2 + NADH. Its pathway is amino-acid biosynthesis; L-leucine biosynthesis; L-leucine from 3-methyl-2-oxobutanoate: step 3/4. Functionally, catalyzes the oxidation of 3-carboxy-2-hydroxy-4-methylpentanoate (3-isopropylmalate) to 3-carboxy-4-methyl-2-oxopentanoate. The product decarboxylates to 4-methyl-2 oxopentanoate. This Pichia angusta (Yeast) protein is 3-isopropylmalate dehydrogenase (LEU2).